Here is a 690-residue protein sequence, read N- to C-terminus: Heterogeneous nuclear ribonucleoprotein M (690 aa).

Positions 1 to 13 (MAAGVEAAAEVAA) are enriched in low complexity. The tract at residues 1–63 (MAAGVEAAAE…KRGGNRFEPY (63 aa)) is disordered. Ala-2 is modified (N-acetylalanine). A Glycyl lysine isopeptide (Lys-Gly) (interchain with G-Cter in SUMO2) cross-link involves residue Lys-17. Phosphoserine is present on Ser-29. Glycyl lysine isopeptide (Lys-Gly) (interchain with G-Cter in SUMO2) cross-links involve residues Lys-37, Lys-68, and Lys-82. Residues 37-49 (KGEERPTQNEKRK) show a composition bias toward basic and acidic residues. RRM domains lie at 70–148 (YRAF…EDPD) and 164–241 (STVF…MDER). At Ser-85 the chain carries Phosphoserine. Glycyl lysine isopeptide (Lys-Gly) (interchain with G-Cter in SUMO2) cross-links involve residues Lys-87 and Lys-126. Lys-133 carries the post-translational modification N6-acetyllysine; alternate. Residue Lys-133 forms a Glycyl lysine isopeptide (Lys-Gly) (interchain with G-Cter in SUMO2); alternate linkage. Residues Lys-142 and Lys-144 each participate in a glycyl lysine isopeptide (Lys-Gly) (interchain with G-Cter in SUMO2) cross-link. Ser-164 is subject to Phosphoserine. A Glycyl lysine isopeptide (Lys-Gly) (interchain with G-Cter in SUMO2) cross-link involves residue Lys-181. Lys-237 bears the N6-acetyllysine; alternate mark. Residue Lys-237 forms a Glycyl lysine isopeptide (Lys-Gly) (interchain with G-Cter in SUMO2); alternate linkage. Glycyl lysine isopeptide (Lys-Gly) (interchain with G-Cter in SUMO2) cross-links involve residues Lys-245 and Lys-305. 2 positions are modified to phosphoserine: Ser-325 and Ser-337. Residues Lys-341 and Lys-348 each participate in a glycyl lysine isopeptide (Lys-Gly) (interchain with G-Cter in SUMO2) cross-link. Ser-357 carries the phosphoserine modification. 4 tandem repeats follow at residues 360–365 (GIERMG), 367–372 (GIDRIS), 375–380 (GMERMG), and 386–391 (GMDRVG). The interval 360–568 (GIERMGPGID…ALGAGIERMG (209 aa)) is 27 X 6 AA repeats of [GEVSTPAN]-[ILMV]-[DE]-[RH]-[MLVI]-[GAV]. At Ser-392 the chain carries Phosphoserine. A run of 3 repeats spans residues 393–398 (EIERMG), 400–405 (VMDRMG), and 406–411 (SVERMG). Ser-412 bears the Phosphoserine mark. 4 repeat units span residues 413-418 (GIERMG), 421-426 (GLDHMA), 428-433 (SIERMG), and 435-440 (TMERIG). Ser-428 carries the phosphoserine modification. Ser-441 bears the Phosphoserine mark. 16 tandem repeats follow at residues 442 to 447 (GVERMG), 453 to 458 (GLERMA), 460 to 465 (PIDRVG), 467 to 472 (TIERMG), 474 to 479 (GVERMG), 481 to 486 (AIERMG), 488 to 493 (SMDRMV), 500 to 505 (GLERMG), 507 to 512 (VMDRMA), 514 to 519 (GLERMG), 522 to 527 (NLERMG), 528 to 532 (LERMG), 535 to 540 (SLERMG), 541 to 545 (LERMG), 548 to 553 (SLERMG), and 563 to 568 (GIERMG). Arg-456 carries the omega-N-methylarginine modification. Ser-488 carries the phosphoserine modification. Phosphoserine is present on Ser-535. Ser-548 carries the post-translational modification Phosphoserine. Phosphoserine occurs at positions 578, 593, and 597. A Glycyl lysine isopeptide (Lys-Gly) (interchain with G-Cter in SUMO2) cross-link involves residue Lys-611. Residues 613–689 (CQIFVRNLPF…REIDVRIDRN (77 aa)) form the RRM 3 domain. Thr-625 is modified (phosphothreonine). Residue Lys-627 forms a Glycyl lysine isopeptide (Lys-Gly) (interchain with G-Cter in SUMO2) linkage. Residue Lys-632 is modified to N6-acetyllysine. Residues Lys-645 and Lys-652 each participate in a glycyl lysine isopeptide (Lys-Gly) (interchain with G-Cter in SUMO2) cross-link. Lys-658 carries the post-translational modification N6-acetyllysine; alternate. Residue Lys-658 forms a Glycyl lysine isopeptide (Lys-Gly) (interchain with G-Cter in SUMO2); alternate linkage. Residue Lys-658 forms a Glycyl lysine isopeptide (Lys-Gly) (interchain with G-Cter in SUMO1); alternate linkage. Ser-661 bears the Phosphoserine mark. A Glycyl lysine isopeptide (Lys-Gly) (interchain with G-Cter in SUMO2) cross-link involves residue Lys-676.

Identified in the spliceosome C complex. Interacts with PPIA/CYPA. Sumoylated. Expressed in all tissues tested, including liver, heart, lung, skeletal muscle, kidney, stomach, large intestine, small intestine, pancreas, spleen, peritoneal macrophage and thyroid.

Its subcellular location is the nucleus matrix. Pre-mRNA binding protein, binds avidly to poly(G) and poly(U) RNA homopolymers. Involved in splicing. Acts as a receptor for carcinoembryonic antigen in Kupffer cells, may initiate a series of signaling events leading to tyrosine phosphorylation of proteins and induction of IL-1 alpha, IL-6, IL-10 and tumor necrosis factor alpha cytokines. In Rattus norvegicus (Rat), this protein is Heterogeneous nuclear ribonucleoprotein M (Hnrnpm).